The following is a 255-amino-acid chain: MKKWLLLLVAACITFALTACGSSNSGSESGKKKLIMGTSADYKPFEYKEGDNIVGFDVELAKALAKKAGYEIEVQDMDFNSLITALKSKQVDLVLSGMTPTPERKKQVDFSDVYYTANHMIVSKKDSGIQSLKDLKGKTVGVQLGSIQEEKGKELSPEYGFKTEDRNRISDLVQEIKSDRFDAAIIEDIVAEGYFKSNDDLQGFVIPDAKAEEAGSAIAFRKDSELTDKFNKALKEMEDNGELEKLKKKWFTGEK.

A signal peptide spans 1 to 19; sequence MKKWLLLLVAACITFALTA. The N-palmitoyl cysteine moiety is linked to residue C20. The S-diacylglycerol cysteine moiety is linked to residue C20.

The protein belongs to the bacterial solute-binding protein 3 family.

The protein resides in the cell membrane. Functionally, part of a binding-protein-dependent transport system for arginine. The polypeptide is Arginine-binding extracellular protein ArtP (artP) (Bacillus subtilis (strain 168)).